The chain runs to 266 residues: MIYSRSRLPSEGEILIATVKQVFDYGSYITLDEYGGLQAFLPWSEVSSKWVKNIRDVLKENRKVVVKVIRVDRRKGTVDVSLKKVTDDERRKKNLQWKKIQRLDKILELVSQQLKLSEKDAWEQVAWKLEAKYGDPISAIERAVKEGEKILIDAGVPEIWIKPLLEEAAKHTEEKKVKMSGLITVKTSEPLGVQKIKEVMSKALENIEQDYESILNVKIYTIGAPRYRVDVVGTNPKDASEALNQIISNLIKIGKEENVDISVVKK.

The region spanning glycine 12–lysine 83 is the S1 motif domain.

It belongs to the eIF-2-alpha family. Heterotrimer composed of an alpha, a beta and a gamma chain.

Functionally, eIF-2 functions in the early steps of protein synthesis by forming a ternary complex with GTP and initiator tRNA. This Saccharolobus islandicus (strain L.S.2.15 / Lassen #1) (Sulfolobus islandicus) protein is Translation initiation factor 2 subunit alpha.